Consider the following 498-residue polypeptide: ATP synthase subunit beta, chloroplastic (498 aa).

172 to 179 serves as a coordination point for ATP; that stretch reads GGAGVGKT.

This sequence belongs to the ATPase alpha/beta chains family. F-type ATPases have 2 components, CF(1) - the catalytic core - and CF(0) - the membrane proton channel. CF(1) has five subunits: alpha(3), beta(3), gamma(1), delta(1), epsilon(1). CF(0) has four main subunits: a(1), b(1), b'(1) and c(9-12).

It is found in the plastid. It localises to the chloroplast thylakoid membrane. It catalyses the reaction ATP + H2O + 4 H(+)(in) = ADP + phosphate + 5 H(+)(out). In terms of biological role, produces ATP from ADP in the presence of a proton gradient across the membrane. The catalytic sites are hosted primarily by the beta subunits. This is ATP synthase subunit beta, chloroplastic from Balaka seemannii.